Here is a 319-residue protein sequence, read N- to C-terminus: Acetyl-coenzyme A carboxylase carboxyl transferase subunit alpha (319 aa).

In terms of domain architecture, CoA carboxyltransferase C-terminal spans 35 to 296 (DLDKEIEQLE…KATLVANLAE (262 aa)).

This sequence belongs to the AccA family. As to quaternary structure, acetyl-CoA carboxylase is a heterohexamer composed of biotin carboxyl carrier protein (AccB), biotin carboxylase (AccC) and two subunits each of ACCase subunit alpha (AccA) and ACCase subunit beta (AccD).

It is found in the cytoplasm. It catalyses the reaction N(6)-carboxybiotinyl-L-lysyl-[protein] + acetyl-CoA = N(6)-biotinyl-L-lysyl-[protein] + malonyl-CoA. It functions in the pathway lipid metabolism; malonyl-CoA biosynthesis; malonyl-CoA from acetyl-CoA: step 1/1. Its function is as follows. Component of the acetyl coenzyme A carboxylase (ACC) complex. First, biotin carboxylase catalyzes the carboxylation of biotin on its carrier protein (BCCP) and then the CO(2) group is transferred by the carboxyltransferase to acetyl-CoA to form malonyl-CoA. This is Acetyl-coenzyme A carboxylase carboxyl transferase subunit alpha from Photobacterium profundum (strain SS9).